The sequence spans 784 residues: Repetin (784 aa).

The S-100-like stretch occupies residues 1–91 (MAQLLNSILS…VQACYHKLDN (91 aa)). EF-hand domains lie at 13–48 (DVFH…LQRP) and 49–84 (NDPE…LVQA). Ca(2+) contacts are provided by E32, D62, D64, D66, H68, and E73. Disordered regions lie at residues 92 to 221 (KSHG…QAKW), 282 to 584 (GCGQ…SHYI), 601 to 661 (TEGT…HQHK), and 677 to 784 (RDWQ…NHQR). The segment covering 124–201 (RHEEERQNSH…FSFDQSERQS (78 aa)) has biased composition (basic and acidic residues). Polar residues-rich tracts occupy residues 286–296 (TDRQGQSSHYG), 304–343 (SYHY…SSHY), 356–392 (DQTN…SHYG), 400–486 (SSHY…QSSH), 504–584 (GQGQ…SHYI), 610–646 (VEQS…QNGH), and 680–695 (QSCS…QTRQ). Composition is skewed to basic and acidic residues over residues 704–722 (WAEE…HESQ) and 729–784 (QDRR…NHQR).

This sequence belongs to the S100-fused protein family. Potential substrate of transglutaminase. Some arginines are probably converted to citrullines by peptidylarginine deimidase. As to expression, expression is scattered in the normal epidermis but strong in the acrosyringium, the inner hair root sheath and in the filiform papilli of the tongue.

The protein resides in the secreted. It localises to the extracellular space. The protein localises to the extracellular matrix. In terms of biological role, involved in the cornified cell envelope formation. Multifunctional epidermal matrix protein. Reversibly binds calcium. This chain is Repetin (RPTN), found in Homo sapiens (Human).